A 159-amino-acid chain; its full sequence is Ribosome maturation factor RimP (159 aa).

It belongs to the RimP family.

It is found in the cytoplasm. In terms of biological role, required for maturation of 30S ribosomal subunits. The protein is Ribosome maturation factor RimP of Geobacter metallireducens (strain ATCC 53774 / DSM 7210 / GS-15).